A 921-amino-acid polypeptide reads, in one-letter code: Probable dipeptidyl-aminopeptidase B (921 aa).

Residues 1-87 (MDAPATASRQ…EADTNDLETG (87 aa)) are disordered. The Cytoplasmic segment spans residues 1 to 108 (MDAPATASRQ…RVGVDRGLKK (108 aa)). Residues 22 to 33 (SSLSTVSTTSLV) show a composition bias toward low complexity. Basic and acidic residues predominate over residues 35-45 (DRLHEHNEKSY). The span at 66–75 (PDDDDDDDES) shows a compositional bias: acidic residues. The helical; Signal-anchor for type II membrane protein transmembrane segment at 109–129 (VILILAAAFLFAWGAALFVFL) threads the bilayer. The Vacuolar portion of the chain corresponds to 130–921 (SNKSYKHAST…KPIVEPKARV (792 aa)). Asn-131, Asn-364, and Asn-577 each carry an N-linked (GlcNAc...) asparagine glycan. Ser-768 functions as the Charge relay system in the catalytic mechanism. Residue Asn-827 is glycosylated (N-linked (GlcNAc...) asparagine). Residues Asp-845 and His-878 each act as charge relay system in the active site.

Belongs to the peptidase S9B family.

Its subcellular location is the vacuole membrane. The enzyme catalyses Release of an N-terminal dipeptide, Xaa-Yaa-|-Zaa-, from a polypeptide, preferentially when Yaa is Pro, provided Zaa is neither Pro nor hydroxyproline.. In terms of biological role, type IV dipeptidyl-peptidase which removes N-terminal dipeptides sequentially from polypeptides having unsubstituted N-termini provided that the penultimate residue is proline. This Colletotrichum graminicola (strain M1.001 / M2 / FGSC 10212) (Maize anthracnose fungus) protein is Probable dipeptidyl-aminopeptidase B (DAPB).